The following is a 224-amino-acid chain: Adenylate kinase (224 aa).

ATP is bound at residue 10–15; the sequence is GSGKST. Positions 30–59 are NMP; it reads ASGDIIRAEINKGNALGREMKKYIEKGDLL. Residues Ser-31, Arg-36, 57–59, 83–86, and Gln-90 each bind AMP; these read DLL and GYPR. Residues 124 to 161 are LID; it reads GRRICRQCGAVYHIKYNPSKVPGKCDICGGEVIQREDD. ATP is bound at residue Arg-125. Cys-128 and Cys-131 together coordinate Zn(2+). 134–135 is an ATP binding site; the sequence is VY. Cys-148 and Cys-151 together coordinate Zn(2+). Residues Arg-158 and Arg-169 each coordinate AMP. Gly-197 contacts ATP.

Belongs to the adenylate kinase family. As to quaternary structure, monomer.

It localises to the cytoplasm. The enzyme catalyses AMP + ATP = 2 ADP. It participates in purine metabolism; AMP biosynthesis via salvage pathway; AMP from ADP: step 1/1. In terms of biological role, catalyzes the reversible transfer of the terminal phosphate group between ATP and AMP. Plays an important role in cellular energy homeostasis and in adenine nucleotide metabolism. The protein is Adenylate kinase of Thermococcus sibiricus (strain DSM 12597 / MM 739).